The chain runs to 492 residues: Solute carrier family 2, facilitated glucose transporter member 1 (492 aa).

At Met1 the chain carries N-acetylmethionine. Over 1 to 11 (MEPSSKKVTGR) the chain is Cytoplasmic. A helical membrane pass occupies residues 12–33 (LMLAVGGAVLGSLQFGYNTGVI). At 34-66 (NAPQKVIEEFYNQTWIHRYGERILPTTLTTLWS) the chain is on the extracellular side. N-linked (GlcNAc...) asparagine glycosylation occurs at Asn45. The chain crosses the membrane as a helical span at residues 67-87 (LSVAIFSVGGMIGSFSVGLFV). Residues 88-90 (NRF) are Cytoplasmic-facing. A helical membrane pass occupies residues 91–112 (GRRNSMLMMNLLAFVSAVLMGF). At 113-120 (SKLAKSFE) the chain is on the extracellular side. A helical transmembrane segment spans residues 121-144 (MLILGRFIIGVYCGLTTGFVPMYV). Topologically, residues 145–155 (GEVSPTALRGA) are cytoplasmic. The chain crosses the membrane as a helical span at residues 156 to 176 (LGTLHQLGIVVGILIAQVFGL). Residue Gln161 participates in D-glucose binding. Residues 177 to 185 (DSIMGNEDL) are Extracellular-facing. A helical membrane pass occupies residues 186 to 206 (WPLLLSVIFVPALLQCIVLPL). Residues 207–271 (CPESPRFLLI…LFRSPAYRQP (65 aa)) are Cytoplasmic-facing. At Ser226 the chain carries Phosphoserine. A helical transmembrane segment spans residues 272–293 (ILSAVVLQLSQQLSGINAVFYY). D-glucose contacts are provided by residues 282–283 (QQ) and Asn288. Topologically, residues 294 to 306 (STSIFEKAGVQQP) are extracellular. The chain crosses the membrane as a helical span at residues 307–328 (VYATIGSGIVNTAFTVVSLFVV). Asn317 lines the D-glucose pocket. At 329 to 334 (ERAGRR) the chain is on the cytoplasmic side. The chain crosses the membrane as a helical span at residues 335-355 (TLHLIGLAGMAACAVLMTIAL). Residues 356–365 (ALLEQLPWMS) are Extracellular-facing. The chain crosses the membrane as a helical span at residues 366-388 (YLSIVAIFGFVAFFEVGPGPIPW). D-glucose is bound by residues Glu380 and Trp388. Over 389-401 (FIVAELFSQGPRP) the chain is Cytoplasmic. Residues 402–422 (AAVAVAGFSNWTSNFIVGMCF) traverse the membrane as a helical segment. Residues 423 to 429 (QYVEQLC) lie on the Extracellular side of the membrane. A helical transmembrane segment spans residues 430–450 (GPYVFIIFTVLLVLFFIFTYF). Residues 451–492 (KVPETKGRTFDEIASGFRQGGASQSDKTPEELFHPLGADSQV) lie on the Cytoplasmic side of the membrane. Ser465 is modified (phosphoserine). The tract at residues 468–492 (RQGGASQSDKTPEELFHPLGADSQV) is disordered. At Thr478 the chain carries Phosphothreonine. A Phosphoserine modification is found at Ser490.

Belongs to the major facilitator superfamily. Sugar transporter (TC 2.A.1.1) family. Glucose transporter subfamily. As to quaternary structure, found in a complex with ADD2, DMTN and SLC2A1. Interacts (via C-terminus cytoplasmic region) with DMTN. Interacts with SNX27; the interaction is required when endocytosed to prevent degradation in lysosomes and promote recycling to the plasma membrane. Interacts with GIPC (via PDZ domain). Interacts with STOM. Interacts with SGTA (via Gln-rich region). Interacts with BSG. Interacts with SMIM43; the interaction may promote SLC2A1-mediated glucose transport to meet the energy needs of mesendoderm differentiation. Post-translationally, phosphorylation at Ser-226 by PKC promotes glucose uptake by increasing cell membrane localization.

It is found in the cell membrane. The protein resides in the photoreceptor inner segment. It carries out the reaction D-glucose(out) = D-glucose(in). Its activity is regulated as follows. The uptake of glucose is inhibited by cytochalasin B. Glucose uptake is increased in response to phorbol ester 12-O-tetradecanoylphorbol-13-acetate (TPA) treatment: TPA-induced glucose uptake requires phosphorylation at Ser-226. Facilitative glucose transporter, which is responsible for constitutive or basal glucose uptake. Has a very broad substrate specificity; can transport a wide range of aldoses including both pentoses and hexoses. Most important energy carrier of the brain: present at the blood-brain barrier and assures the energy-independent, facilitative transport of glucose into the brain. In association with BSG and NXNL1, promotes retinal cone survival by increasing glucose uptake into photoreceptors. Required for mesendoderm differentiation. The protein is Solute carrier family 2, facilitated glucose transporter member 1 of Oryctolagus cuniculus (Rabbit).